The chain runs to 374 residues: Probable ethanolamine kinase (374 aa).

ATP contacts are provided by arginine 93 and aspartate 252.

The protein belongs to the choline/ethanolamine kinase family.

It catalyses the reaction ethanolamine + ATP = phosphoethanolamine + ADP + H(+). It participates in phospholipid metabolism; phosphatidylethanolamine biosynthesis; phosphatidylethanolamine from ethanolamine: step 1/3. In terms of biological role, involved in phospholipid biosynthesis. Catalyzes the first step in phosphatidylethanolamine biosynthesis. This chain is Probable ethanolamine kinase (EMB1187), found in Arabidopsis thaliana (Mouse-ear cress).